The primary structure comprises 275 residues: 3-methyl-2-oxobutanoate hydroxymethyltransferase (275 aa).

2 residues coordinate Mg(2+): Asp-49 and Asp-88. 3-methyl-2-oxobutanoate is bound by residues 49–50 (DS), Asp-88, and Lys-118. A Mg(2+)-binding site is contributed by Glu-120. Glu-187 acts as the Proton acceptor in catalysis.

This sequence belongs to the PanB family. As to quaternary structure, homodecamer; pentamer of dimers. Mg(2+) is required as a cofactor.

The protein localises to the cytoplasm. It catalyses the reaction 3-methyl-2-oxobutanoate + (6R)-5,10-methylene-5,6,7,8-tetrahydrofolate + H2O = 2-dehydropantoate + (6S)-5,6,7,8-tetrahydrofolate. Its pathway is cofactor biosynthesis; (R)-pantothenate biosynthesis; (R)-pantoate from 3-methyl-2-oxobutanoate: step 1/2. In terms of biological role, catalyzes the reversible reaction in which hydroxymethyl group from 5,10-methylenetetrahydrofolate is transferred onto alpha-ketoisovalerate to form ketopantoate. The chain is 3-methyl-2-oxobutanoate hydroxymethyltransferase from Brucella suis (strain ATCC 23445 / NCTC 10510).